The following is a 210-amino-acid chain: UPF0502 protein Sama_1967 (210 aa).

This sequence belongs to the UPF0502 family.

This is UPF0502 protein Sama_1967 from Shewanella amazonensis (strain ATCC BAA-1098 / SB2B).